A 192-amino-acid polypeptide reads, in one-letter code: Large ribosomal subunit protein bL25 (192 aa).

It belongs to the bacterial ribosomal protein bL25 family. CTC subfamily. Part of the 50S ribosomal subunit; part of the 5S rRNA/L5/L18/L25 subcomplex. Contacts the 5S rRNA. Binds to the 5S rRNA independently of L5 and L18.

This is one of the proteins that binds to the 5S RNA in the ribosome where it forms part of the central protuberance. The polypeptide is Large ribosomal subunit protein bL25 (Cytophaga hutchinsonii (strain ATCC 33406 / DSM 1761 / CIP 103989 / NBRC 15051 / NCIMB 9469 / D465)).